The primary structure comprises 269 residues: Tryptophan synthase alpha chain (269 aa).

Catalysis depends on proton acceptor residues E49 and D60.

This sequence belongs to the TrpA family. In terms of assembly, tetramer of two alpha and two beta chains.

The catalysed reaction is (1S,2R)-1-C-(indol-3-yl)glycerol 3-phosphate + L-serine = D-glyceraldehyde 3-phosphate + L-tryptophan + H2O. It functions in the pathway amino-acid biosynthesis; L-tryptophan biosynthesis; L-tryptophan from chorismate: step 5/5. Functionally, the alpha subunit is responsible for the aldol cleavage of indoleglycerol phosphate to indole and glyceraldehyde 3-phosphate. In Acidovorax ebreus (strain TPSY) (Diaphorobacter sp. (strain TPSY)), this protein is Tryptophan synthase alpha chain.